The following is a 190-amino-acid chain: Potassium-transporting ATPase KdpC subunit (190 aa).

Residues 10-30 (TFLFLLLITGGVYPLLTTALG) form a helical membrane-spanning segment.

The protein belongs to the KdpC family. In terms of assembly, the system is composed of three essential subunits: KdpA, KdpB and KdpC.

It is found in the cell inner membrane. Its function is as follows. Part of the high-affinity ATP-driven potassium transport (or Kdp) system, which catalyzes the hydrolysis of ATP coupled with the electrogenic transport of potassium into the cytoplasm. This subunit acts as a catalytic chaperone that increases the ATP-binding affinity of the ATP-hydrolyzing subunit KdpB by the formation of a transient KdpB/KdpC/ATP ternary complex. The protein is Potassium-transporting ATPase KdpC subunit of Escherichia coli O81 (strain ED1a).